We begin with the raw amino-acid sequence, 107 residues long: UPF0145 protein CKO_02237 (107 aa).

This sequence belongs to the UPF0145 family.

The protein is UPF0145 protein CKO_02237 of Citrobacter koseri (strain ATCC BAA-895 / CDC 4225-83 / SGSC4696).